The following is a 1862-amino-acid chain: Protein RRP5 homolog (1862 aa).

The disordered stretch occupies residues 1 to 56 (MANLEESFPRGGTRKLHKSEKSSQQVVEQDNLFDVSTEEGPIKRKKSQKGPAKTKK). Ala-2 bears the N-acetylalanine mark. Ser-7 is subject to Phosphoserine. Over residues 43 to 56 (KRKKSQKGPAKTKK) the composition is skewed to basic residues. S1 motif domains lie at 83 to 171 (GMRI…LSVN), 187 to 258 (GMLL…LSVE), 281 to 346 (GLLV…LSLR), and 365 to 436 (GAVL…LSLR). A Phosphoserine modification is found at Ser-438. S1 motif domains are found at residues 453–522 (GTVV…MTLK), 542–611 (GLQT…LSFR), 636–707 (GQLV…LCRK), 729–798 (GMLL…LSLR), and 846–911 (GMVL…VSLH). The interval 999-1036 (SKRTRMPVQRDSETVDDKGEEKEEEEEEEEKEEENLTV) is disordered. Over residues 1006-1019 (VQRDSETVDDKGEE) the composition is skewed to basic and acidic residues. The span at 1020–1033 (KEEEEEEEEKEEEN) shows a compositional bias: acidic residues. 4 S1 motif domains span residues 1047-1120 (GDKV…ISHP), 1160-1233 (GQTV…LSLI), 1241-1309 (GEVA…LSLR), and 1335-1407 (GQLL…LSLL). Disordered stretches follow at residues 1406 to 1520 (LLPS…STEV) and 1545 to 1577 (REES…KAEK). Basic and acidic residues-rich tracts occupy residues 1423–1437 (PKQE…EGQK) and 1445–1454 (RREEKEEPQK). A Glycyl lysine isopeptide (Lys-Gly) (interchain with G-Cter in SUMO2) cross-link involves residue Lys-1424. Ser-1468 and Ser-1490 each carry phosphoserine. A compositionally biased stretch (basic and acidic residues) spans 1566 to 1577 (KERELEKQKAEK). HAT repeat units lie at residues 1590–1622 (GRQP…FHLQ), 1696–1728 (EKYK…FVLG), 1766–1798 (GDVE…MTIK), and 1800–1835 (GSQT…YEKQ).

In terms of assembly, interacts with NF-kappa-B p50/NFKB1 and NF-kappa-B p65/RELA. Ubiquitous.

It localises to the nucleus. Its subcellular location is the nucleolus. Functionally, essential for the generation of mature 18S rRNA, specifically necessary for cleavages at sites A0, 1 and 2 of the 47S precursor. Directly interacts with U3 snoRNA. This Mus musculus (Mouse) protein is Protein RRP5 homolog (Pdcd11).